The chain runs to 362 residues: Glycyl-glycine endopeptidase ALE-1 (362 aa).

The N-terminal stretch at 1 to 35 (MDTNRKFTLVKSLSIGLGTFLVGSVFLTVNDEASA) is a signal peptide. Residues 35–110 (ASTKVDAPKV…PAKADAPKVE (76 aa)) are disordered. Positions 40 to 110 (DAPKVEQEAP…PAKADAPKVE (71 aa)) are enriched in basic and acidic residues. Residues histidine 150 and aspartate 154 each coordinate Zn(2+). The active site involves histidine 231. Histidine 233 is a Zn(2+) binding site. An SH3b domain is found at 282–350 (SESASFTANT…YLPVRTWNES (69 aa)).

This sequence belongs to the peptidase M23B family. Requires Zn(2+) as cofactor.

It localises to the secreted. It catalyses the reaction Hydrolysis of the -Gly-|-Gly- bond in the pentaglycine inter-peptide link joining staphylococcal cell wall peptidoglycans.. Functionally, lyses staphylococcal cells by hydrolyzing the polyglycine interpeptide bridges of the peptidoglycan. The sequence is that of Glycyl-glycine endopeptidase ALE-1 from Staphylococcus capitis.